Reading from the N-terminus, the 476-residue chain is Glutamate mutase epsilon subunit (476 aa).

R62 contacts L-glutamate. Residue G64 coordinates adenosylcob(III)alamin. R96 contacts L-glutamate. Residue N119 participates in adenosylcob(III)alamin binding. L-glutamate is bound by residues 145–146 (RH), E167, and Y173. P176 contributes to the adenosylcob(III)alamin binding site. Y177 contributes to the L-glutamate binding site. Adenosylcob(III)alamin-binding residues include F289, K318, and E322.

It belongs to the methylaspartate mutase GlmE subunit family. In terms of assembly, heterotetramer composed of 2 epsilon subunits (GlmE) and 2 sigma subunits (GlmS). GlmE exists as a homodimer and GlmS as a monomer. Adenosylcob(III)alamin serves as cofactor.

It carries out the reaction (2S,3S)-3-methyl-L-aspartate = L-glutamate. It participates in amino-acid degradation; L-glutamate degradation via mesaconate pathway; acetate and pyruvate from L-glutamate: step 1/4. Its function is as follows. Catalyzes the carbon skeleton rearrangement of L-glutamate to L-threo-3-methylaspartate ((2S,3S)-3-methylaspartate). This chain is Glutamate mutase epsilon subunit, found in Halobacterium salinarum (strain ATCC 700922 / JCM 11081 / NRC-1) (Halobacterium halobium).